A 511-amino-acid polypeptide reads, in one-letter code: Putative thymidine phosphorylase 1 (511 aa).

It belongs to the thymidine/pyrimidine-nucleoside phosphorylase family. Type 2 subfamily.

It carries out the reaction thymidine + phosphate = 2-deoxy-alpha-D-ribose 1-phosphate + thymine. The chain is Putative thymidine phosphorylase 1 from Acidovorax sp. (strain JS42).